Here is a 544-residue protein sequence, read N- to C-terminus: Chaperonin GroEL (544 aa).

Residues 30 to 33 (TLGP), K51, 87 to 91 (DGTTT), G415, 479 to 481 (NAA), and D495 contribute to the ATP site.

This sequence belongs to the chaperonin (HSP60) family. Forms a cylinder of 14 subunits composed of two heptameric rings stacked back-to-back. Interacts with the co-chaperonin GroES.

The protein localises to the cytoplasm. The enzyme catalyses ATP + H2O + a folded polypeptide = ADP + phosphate + an unfolded polypeptide.. In terms of biological role, together with its co-chaperonin GroES, plays an essential role in assisting protein folding. The GroEL-GroES system forms a nano-cage that allows encapsulation of the non-native substrate proteins and provides a physical environment optimized to promote and accelerate protein folding. In Francisella tularensis subsp. holarctica (strain FTNF002-00 / FTA), this protein is Chaperonin GroEL.